Here is a 307-residue protein sequence, read N- to C-terminus: Acetyl-coenzyme A carboxylase carboxyl transferase subunit beta (307 aa).

In terms of domain architecture, CoA carboxyltransferase N-terminal spans L28–P297. Residues R286–A307 are disordered. Pro residues predominate over residues G292–A307.

The protein belongs to the AccD/PCCB family. In terms of assembly, acetyl-CoA carboxylase is a heterohexamer composed of biotin carboxyl carrier protein (AccB), biotin carboxylase (AccC) and two subunits each of ACCase subunit alpha (AccA) and ACCase subunit beta (AccD).

It localises to the cytoplasm. It carries out the reaction N(6)-carboxybiotinyl-L-lysyl-[protein] + acetyl-CoA = N(6)-biotinyl-L-lysyl-[protein] + malonyl-CoA. Its pathway is lipid metabolism; malonyl-CoA biosynthesis; malonyl-CoA from acetyl-CoA: step 1/1. Functionally, component of the acetyl coenzyme A carboxylase (ACC) complex. Biotin carboxylase (BC) catalyzes the carboxylation of biotin on its carrier protein (BCCP) and then the CO(2) group is transferred by the transcarboxylase to acetyl-CoA to form malonyl-CoA. The chain is Acetyl-coenzyme A carboxylase carboxyl transferase subunit beta from Methylorubrum extorquens (strain ATCC 14718 / DSM 1338 / JCM 2805 / NCIMB 9133 / AM1) (Methylobacterium extorquens).